Here is a 946-residue protein sequence, read N- to C-terminus: Probable outer membrane protein pmp18 (946 aa).

The N-terminal stretch at 1–16 (MQNNRSLSKSSFFVGA) is a signal peptide. Positions 668-946 (QGQIAPTASG…YLHAGTTFKF (279 aa)) constitute an Autotransporter domain.

Belongs to the PMP outer membrane protein family.

It is found in the secreted. The protein resides in the cell wall. It localises to the cell outer membrane. The chain is Probable outer membrane protein pmp18 (pmp18) from Chlamydia pneumoniae (Chlamydophila pneumoniae).